Here is a 210-residue protein sequence, read N- to C-terminus: Ribosomal RNA large subunit methyltransferase E (210 aa).

The S-adenosyl-L-methionine site is built by Gly60, Trp62, Asp80, Asp96, and Asp121. Lys161 acts as the Proton acceptor in catalysis.

Belongs to the class I-like SAM-binding methyltransferase superfamily. RNA methyltransferase RlmE family.

It is found in the cytoplasm. It carries out the reaction uridine(2552) in 23S rRNA + S-adenosyl-L-methionine = 2'-O-methyluridine(2552) in 23S rRNA + S-adenosyl-L-homocysteine + H(+). In terms of biological role, specifically methylates the uridine in position 2552 of 23S rRNA at the 2'-O position of the ribose in the fully assembled 50S ribosomal subunit. The sequence is that of Ribosomal RNA large subunit methyltransferase E from Vesicomyosocius okutanii subsp. Calyptogena okutanii (strain HA).